A 718-amino-acid chain; its full sequence is Protein Hook homolog 1 (718 aa).

The region spanning P8–A124 is the Calponin-homology (CH) domain. Coiled-coil stretches lie at residues S164–Y428 and L473–R652.

It belongs to the hook family. As to quaternary structure, interacts with microtubules.

The protein localises to the cytoplasm. It localises to the cytoskeleton. May function to promote vesicle trafficking and/or fusion. This chain is Protein Hook homolog 1 (HOOK1), found in Gallus gallus (Chicken).